Consider the following 162-residue polypeptide: Small ribosomal subunit protein uS19 (162 aa).

Residues 1–27 (MAKQKKFSGKGSARSKRKQNRKQVGPR) show a composition bias toward basic residues. Residues 1-29 (MAKQKKFSGKGSARSKRKQNRKQVGPRRR) are disordered.

It belongs to the universal ribosomal protein uS19 family.

Protein S19 forms a complex with S13 that binds strongly to the 16S ribosomal RNA. This is Small ribosomal subunit protein uS19 from Methanococcus aeolicus (strain ATCC BAA-1280 / DSM 17508 / OCM 812 / Nankai-3).